The primary structure comprises 151 residues: Single-stranded DNA-binding protein, mitochondrial (151 aa).

A mitochondrion-targeting transit peptide spans 1–16 (MFRRPVLQVFRQFVRQ). One can recognise an SSB domain in the interval 30–141 (LNRVQLLGRV…IIADNIIFLS (112 aa)). Phosphoserine is present on residues serine 67 and serine 79. At lysine 113 the chain carries N6-acetyllysine. N6-succinyllysine is present on lysine 122.

Homotetramer. Interacts with MPG/AAG, through inhibition of its glycosylase activity it potentially prevents formation of DNA breaks in ssDNA, ensuring that base removal primarily occurs in dsDNA. Interacts with POLDIP2. Interacts with PRIMPOL.

It localises to the mitochondrion. The protein resides in the mitochondrion matrix. It is found in the mitochondrion nucleoid. In terms of biological role, binds preferentially and cooperatively to pyrimidine rich single-stranded DNA (ss-DNA). In vitro, required to maintain the copy number of mitochondrial DNA (mtDNA) and plays a crucial role during mtDNA replication by stimulating the activity of the replisome components POLG and TWNK at the replication fork. Promotes the activity of the gamma complex polymerase POLG, largely by organizing the template DNA and eliminating secondary structures to favor ss-DNA conformations that facilitate POLG activity. In addition it is able to promote the 5'-3' unwinding activity of the mtDNA helicase TWNK. May also function in mtDNA repair. This is Single-stranded DNA-binding protein, mitochondrial (Ssbp1) from Rattus norvegicus (Rat).